The following is a 441-amino-acid chain: MRISSTLLQRSKQLIDKYALYVPKTGSFPKGFEVGYTASGVKKNGSLDLGVILNTNKSRPSTAAAVFTTNKFKAAPVLTSKKVLETARGKNINAIVVNSGCANSVTGDLGMKDAQVMIDLVNDKIGQKNSTLVMSTGVIGQRLQMDKISTGINKIFGEEKFGSDFNSWLNVAKSICTTDTFPKLVTSRFKLPSGTEYTLTGMAKGAGMICPNMATLLGFIVTDLPIESKALQKMLTFATTRSFNCISVDGDMSTNDTICMLANGAIDTKEINEDSKDFEQVKLQATEFAQRLAQLVVRDGEGSTKFVTVNVKNALHFEDAKIIAESISNSMLVKTALYGQDANWGRILCAIGYAKLNDLKSLDVNKINVSFIATDNSEPRELKLVANGVPQLEIDETRASEILALNDLEVSVDLGTGDQAAQFWTCDLSHEYVTINGDYRS.

Residues 1 to 8 constitute a mitochondrion transit peptide; that stretch reads MRISSTLL. Residues Thr177, Lys204, Thr215, Glu301, Asn436, and Ser441 each coordinate substrate. The active-site Nucleophile is Thr215.

It belongs to the ArgJ family. As to quaternary structure, heterodimer of an alpha and a beta chain. The alpha and beta chains are autoproteolytically processed from a single precursor protein within the mitochondrion.

The protein resides in the mitochondrion matrix. It carries out the reaction N(2)-acetyl-L-ornithine + L-glutamate = N-acetyl-L-glutamate + L-ornithine. The catalysed reaction is L-glutamate + acetyl-CoA = N-acetyl-L-glutamate + CoA + H(+). The protein operates within amino-acid biosynthesis; L-arginine biosynthesis; L-ornithine and N-acetyl-L-glutamate from L-glutamate and N(2)-acetyl-L-ornithine (cyclic): step 1/1. It functions in the pathway amino-acid biosynthesis; L-arginine biosynthesis; N(2)-acetyl-L-ornithine from L-glutamate: step 1/4. In terms of biological role, catalyzes two activities which are involved in the cyclic version of arginine biosynthesis: the synthesis of acetylglutamate from glutamate and acetyl-CoA, and of ornithine by transacetylation between acetylornithine and glutamate. This Saccharomyces cerevisiae (strain Lalvin EC1118 / Prise de mousse) (Baker's yeast) protein is Arginine biosynthesis bifunctional protein ArgJ, mitochondrial.